We begin with the raw amino-acid sequence, 87 residues long: Small ribosomal subunit protein uS17 (87 aa).

This sequence belongs to the universal ribosomal protein uS17 family. As to quaternary structure, part of the 30S ribosomal subunit.

Functionally, one of the primary rRNA binding proteins, it binds specifically to the 5'-end of 16S ribosomal RNA. This chain is Small ribosomal subunit protein uS17, found in Neisseria meningitidis serogroup C (strain 053442).